A 415-amino-acid chain; its full sequence is Neuromedin-U receptor 2 (415 aa).

Residues 1–49 lie on the Extracellular side of the membrane; that stretch reads MSGMEKLQNASWIYQQKLEDPFQKHLNSTEEYLAFLCGPRRSHFFLPVS. N-linked (GlcNAc...) asparagine glycosylation is found at N9 and N27. Residues 50–70 form a helical membrane-spanning segment; that stretch reads VVYVPIFVVGVIGNVLVCLVI. At 71-82 the chain is on the cytoplasmic side; sequence LQHQAMKTPTNY. A helical transmembrane segment spans residues 83-103; it reads YLFSLAVSDLLVLLLGMPLEV. Over 104–123 the chain is Extracellular; sequence YEMWRNYPFLFGPVGCYFKT. C119 and C204 are joined by a disulfide. Residues 124–146 form a helical membrane-spanning segment; the sequence is ALFETVCFASILSITTVSVERYV. Residues 147 to 165 lie on the Cytoplasmic side of the membrane; it reads AILHPFRAKLQSTRRRALR. Residues 166–186 traverse the membrane as a helical segment; that stretch reads ILGIVWGFSVLFSLPNTSIHG. Topologically, residues 187-214 are extracellular; the sequence is IKFHYFPNGSLVPGSATCTVIKPMWIYN. An N-linked (GlcNAc...) asparagine glycan is attached at N194. The chain crosses the membrane as a helical span at residues 215-235; it reads FIIQVTSFLFYLLPMTVISVL. Residues 236–265 lie on the Cytoplasmic side of the membrane; that stretch reads YYLMALRLKKDKSLEADEGNANIQRPCRKS. The chain crosses the membrane as a helical span at residues 266–286; sequence VNKMLFVLVLVFAICWAPFHI. Topologically, residues 287–301 are extracellular; it reads DRLFFSFVEEWSESL. A helical membrane pass occupies residues 302-322; that stretch reads AAVFNLVHVVSGVFFYLSSAV. At 323–415 the chain is on the cytoplasmic side; that stretch reads NPIIYNLLSR…NYQSFHFNKT (93 aa).

The protein belongs to the G-protein coupled receptor 1 family. In terms of tissue distribution, predominantly expressed in the CNS, particularly in the medulla oblongata, pontine reticular formation, spinal cord, and thalamus. High level in testis whereas lower levels are present in a variety of peripheral tissues including the gastrointestinal tract, genitourinary tract, liver, pancreas, adrenal gland, thyroid gland, lung, trachea, spleen and thymus.

The protein localises to the cell membrane. Its function is as follows. Receptor for the neuromedin-U and neuromedin-S neuropeptides. The sequence is that of Neuromedin-U receptor 2 (NMUR2) from Homo sapiens (Human).